The sequence spans 242 residues: Uridylate kinase (242 aa).

Position 16–19 (16–19 (KVSG)) interacts with ATP. UMP is bound at residue Gly58. 2 residues coordinate ATP: Gly59 and Arg63. UMP contacts are provided by residues Asp78 and 139-146 (TGNPFCTT). ATP contacts are provided by Thr166, Gln167, Tyr172, and Asp175.

The protein belongs to the UMP kinase family. In terms of assembly, homohexamer.

It is found in the cytoplasm. It catalyses the reaction UMP + ATP = UDP + ADP. It participates in pyrimidine metabolism; CTP biosynthesis via de novo pathway; UDP from UMP (UMPK route): step 1/1. With respect to regulation, inhibited by UTP. In terms of biological role, catalyzes the reversible phosphorylation of UMP to UDP. This Rickettsia conorii (strain ATCC VR-613 / Malish 7) protein is Uridylate kinase.